A 711-amino-acid chain; its full sequence is Far upstream element-binding protein 2 (711 aa).

The tract at residues 1–147 (MSDYSTGGPP…HPPPRTSMTE (147 aa)) is disordered. Ser-2 carries the N-acetylserine modification. Over residues 8 to 17 (GPPPGPPPPA) the composition is skewed to pro residues. 2 stretches are compositionally biased toward gly residues: residues 18 to 28 (GGGGGAGGAGG) and 36 to 68 (GAGD…GGPG). At Arg-40 the chain carries Omega-N-methylarginine. The residue at position 87 (Lys-87) is an N6-acetyllysine. Ser-99 carries the post-translational modification Phosphoserine. Thr-100 carries the phosphothreonine modification. A compositionally biased stretch (basic and acidic residues) spans 110–122 (RQLEDGDQPESKK). Lys-121 participates in a covalent cross-link: Glycyl lysine isopeptide (Lys-Gly) (interchain with G-Cter in SUMO1); alternate. Lys-121 participates in a covalent cross-link: Glycyl lysine isopeptide (Lys-Gly) (interchain with G-Cter in SUMO2); alternate. A phosphoserine mark is found at Ser-125, Ser-129, Ser-131, Ser-181, Ser-184, Ser-193, and Ser-274. KH domains are found at residues 144-208 (SMTE…KMML), 233-299 (GTVQ…CEMV), and 322-386 (GGGI…ARII). Positions 392–429 (SLRSGPPGPPGGPGMPPGGRGRGRGQGNWGPPGGEMTF) are disordered. The span at 397-407 (PPGPPGGPGMP) shows a compositional bias: pro residues. Residues 408–424 (PGGRGRGRGQGNWGPPG) are compositionally biased toward gly residues. Residues Arg-411, Arg-413, Arg-415, and Arg-442 each carry the omega-N-methylarginine modification. The KH 4 domain maps to 424-491 (GGEMTFSIPT…QQIDHAKQLI (68 aa)). A Phosphoserine modification is found at Ser-480. The interval 497–569 (GPLCPVGPGP…HDPSKAAAAA (73 aa)) is disordered. 2 stretches are compositionally biased toward pro residues: residues 501–520 (PVGP…PFNP) and 528–542 (PGAP…PHQY). Copy 1 of the repeat occupies 571–582 (DPNAAWAAYYSH). The tract at residues 571 to 684 (DPNAAWAAYY…SAAWAEYYRQ (114 aa)) is 4 X 12 AA imperfect repeats. The interval 583–711 (YYQQPPGPVP…PTQQGQQQAQ (129 aa)) is disordered. The span at 587 to 613 (PPGPVPGPAPAPAAPPAQGEPPQPPPT) shows a compositional bias: pro residues. A run of 3 repeats spans residues 617–628 (DYTKAWEEYYKK), 643–654 (DYTKAWEEYYKK), and 673–684 (DYSAAWAEYYRQ).

It belongs to the KHSRP family. In terms of assembly, part of a ternary complex containing FUBP2, PTBP1, PTBP2 and HNRPH1. Interacts with PARN. Interacts with PQBP1. Phosphorylation at Ser-193 leads to the unfolding of the unstable KH domain 1, creating a site for 14-3-3 YWHAZ binding, which promotes nuclear localization and impairs the RNA degradation function. Detected in neural and non-neural cell lines.

It is found in the nucleus. It localises to the cytoplasm. In terms of biological role, binds to the dendritic targeting element and may play a role in mRNA trafficking. Part of a ternary complex that binds to the downstream control sequence (DCS) of the pre-mRNA. Mediates exon inclusion in transcripts that are subject to tissue-specific alternative splicing. May interact with single-stranded DNA from the far-upstream element (FUSE). May activate gene expression. Also involved in degradation of inherently unstable mRNAs that contain AU-rich elements (AREs) in their 3'-UTR, possibly by recruiting degradation machinery to ARE-containing mRNAs. In Homo sapiens (Human), this protein is Far upstream element-binding protein 2 (KHSRP).